The following is a 438-amino-acid chain: Chromosomal replication initiator protein DnaA (438 aa).

A domain I, interacts with DnaA modulators region spans residues 1-68 (MKDNILSALK…VVKESLGKDA (68 aa)). Residues 68–98 (ATFEIVYKEIDITQENEEKGPLVRKRPLLIT) form a domain II region. The interval 99–314 (PLNPKYTFEN…GAILKLIAYK (216 aa)) is domain III, AAA+ region. ATP-binding residues include Gly142, Gly144, Lys145, and Thr146. Residues 315-438 (NLYGSLNLSI…TKNFAQGESI (124 aa)) are domain IV, binds dsDNA.

The protein belongs to the DnaA family. As to quaternary structure, oligomerizes as a right-handed, spiral filament on DNA at oriC.

It is found in the cytoplasm. Functionally, plays an essential role in the initiation and regulation of chromosomal replication. ATP-DnaA binds to the origin of replication (oriC) to initiate formation of the DNA replication initiation complex once per cell cycle. Binds the DnaA box (a 9 base pair repeat at the origin) and separates the double-stranded (ds)DNA. Forms a right-handed helical filament on oriC DNA; dsDNA binds to the exterior of the filament while single-stranded (ss)DNA is stabiized in the filament's interior. The ATP-DnaA-oriC complex binds and stabilizes one strand of the AT-rich DNA unwinding element (DUE), permitting loading of DNA polymerase. After initiation quickly degrades to an ADP-DnaA complex that is not apt for DNA replication. Binds acidic phospholipids. The chain is Chromosomal replication initiator protein DnaA from Thermosipho africanus (strain TCF52B).